Here is a 298-residue protein sequence, read N- to C-terminus: Apolipoprotein E (298 aa).

An N-terminal signal peptide occupies residues 1–18 (MKVLWAALVVTLLAGCRA). 8 tandem repeats follow at residues 74 to 94 (LLIE…EKEL), 95 to 116 (GPVA…QARL), 117 to 138 (GADM…QAML), 139 to 160 (GQSS…RKRL), 161 to 182 (QRDI…QEGA), 183 to 203 (ERGV…GRLQ), 204 to 221 (ALTS…GEQM), and 222 to 243 (RGRL…REQM). Residues 95-243 (GPVAEDTKAR…DRLEEVREQM (149 aa)) are 8 X 22 AA approximate tandem repeats. Methionine 137 carries the methionine sulfoxide modification. Serine 141 is modified (phosphoserine). The interval 151–161 (SHLRKMRKRLQ) is LDL and other lipoprotein receptors binding. 155–158 (KMRK) is a binding site for heparin. Residues 203 to 271 (QALTSQPLQE…KSWFEPMMED (69 aa)) are lipid-binding and lipoprotein association. 217 to 224 (WGEQMRGR) contacts heparin. Positions 259 to 271 (ARLKSWFEPMMED) are specificity for association with VLDL.

Belongs to the apolipoprotein A1/A4/E family. In terms of assembly, homotetramer. May interact with ABCA1; functionally associated with ABCA1 in the biogenesis of HDLs. May interact with APP/A4 amyloid-beta peptide; the interaction is extremely stable in vitro but its physiological significance is unclear. May interact with MAPT. May interact with MAP2. In the cerebrospinal fluid, interacts with secreted SORL1. Interacts with PMEL; this allows the loading of PMEL luminal fragment on ILVs to induce fibril nucleation. Post-translationally, APOE exists as multiple glycosylated and sialylated glycoforms within cells and in plasma. The extent of glycosylation and sialylation are tissue and context specific. Glycated in plasma VLDL. In terms of processing, phosphorylated by FAM20C in the extracellular medium.

It localises to the secreted. It is found in the extracellular space. The protein resides in the extracellular matrix. The protein localises to the extracellular vesicle. Its subcellular location is the endosome. It localises to the multivesicular body. Its function is as follows. APOE is an apolipoprotein, a protein associating with lipid particles, that mainly functions in lipoprotein-mediated lipid transport between organs via the plasma and interstitial fluids. APOE is a core component of plasma lipoproteins and is involved in their production, conversion and clearance. Apolipoproteins are amphipathic molecules that interact both with lipids of the lipoprotein particle core and the aqueous environment of the plasma. As such, APOE associates with chylomicrons, chylomicron remnants, very low density lipoproteins (VLDL) and intermediate density lipoproteins (IDL) but shows a preferential binding to high-density lipoproteins (HDL). It also binds a wide range of cellular receptors including the LDL receptor/LDLR, the LDL receptor-related proteins LRP1, LRP2 and LRP8 and the very low-density lipoprotein receptor/VLDLR that mediate the cellular uptake of the APOE-containing lipoprotein particles. Finally, APOE also has a heparin-binding activity and binds heparan-sulfate proteoglycans on the surface of cells, a property that supports the capture and the receptor-mediated uptake of APOE-containing lipoproteins by cells. A main function of APOE is to mediate lipoprotein clearance through the uptake of chylomicrons, VLDLs, and HDLs by hepatocytes. APOE is also involved in the biosynthesis by the liver of VLDLs as well as their uptake by peripheral tissues ensuring the delivery of triglycerides and energy storage in muscle, heart and adipose tissues. By participating in the lipoprotein-mediated distribution of lipids among tissues, APOE plays a critical role in plasma and tissues lipid homeostasis. APOE is also involved in two steps of reverse cholesterol transport, the HDLs-mediated transport of cholesterol from peripheral tissues to the liver, and thereby plays an important role in cholesterol homeostasis. First, it is functionally associated with ABCA1 in the biogenesis of HDLs in tissues. Second, it is enriched in circulating HDLs and mediates their uptake by hepatocytes. APOE also plays an important role in lipid transport in the central nervous system, regulating neuron survival and sprouting. The chain is Apolipoprotein E (APOE) from Cavia tschudii (Montane guinea pig).